Here is a 1123-residue protein sequence, read N- to C-terminus: MTSSGKVRIYELSKDLGLDNKDVLDAAEKLSIAAKSHSSSISETEAGKIRSLLKAGSAPRAAASPSKPAPGKAILSVQKAGSGSNSPARPEQPKPAASSPPAAPAAPTKAKSPQQPPARPAAPSRPAAPKASATQTSAPQKPVVRQQPTAQQPVPRPKPKTAPERTVSRPPSPPARPVPQQPSPPSAKPRGTAPIRRAAPNDAPRPANAPPSRPQPKTPVNRTAPPPQRPAAKPELVGRPQPRRPEGPPTRQGAGPGSPRPAVSPRPSAPGSQRNMPQRPAGAQRPGAPTRPGTGAGRPSRPGGNTLELVGKPIRRDGSGNRGEGGRPPGGARPAGGGNRPAMPPGMRKPVAPGELMQLQKPSGRPGVPPPRRPDGTPVTPRGDGPKATPPVSRPTATPPSPATAPRRPGGFRPGAGPGGQRRPGRPDWDDSAKLDALRNRSPQKQRQKVHIIGENDDSLAAQTGGFAGEQQNMVLSASLARPSKPKSQQKAAPKPVAAMRKRRKETTRQRQRRRAMELRAAREAKQVRPEMIVVPEDNLTVQELADMLSVESSEIIKSLFFKGIIATVTQSLDMPTIETVAEEFGVPVLQDDVEEAAKKTVEMIEEQDLEHLIRRPPVVTVMGHVDHGKTSLLDAIRKARVAAGEAGGITQHIGAYQVEIEHSGEPRRLTFLDTPGHEAFTAMRARGTKVTDVAVLVVAADDGVRPQTLEAISHARAAEVPIVVAINKIDKEGASPDRVKQELSEQNLLAEEWGGDVVMVPVSAIKSENIDKLLEMLLLVTEVEDLQANPDRLARGTVIEAHLDKAKGPVATLLVQNGTLRTGDVVAAGPVLGKVRAMVDDASVRLKEAGPSCAVEALGFSEVPTAGDEFEVYPDEKSARAVVGDRASDARATRLAQQMASRRVSLTAMSGQANDGDLKELNLILKADVQGSVEAILGSLEQLPKDEVQVRVLLSAPGEITETDVDLAAASGAVIVGFNTSMASGARKAADANGVDVRDYDVIYKLLEDIQLAMEGLLEPELVEEALGEAEVRAVFTIGKSAVAGCYVTTGKLQRNCKVRVHRGKEIVYAGDLDSLRRNKDDVKEVATGFECGVGTDRFANWQDGDRIEAFKMVTQRRKLTT.

Disordered regions lie at residues L52 to I452 and L480 to Q512. Low complexity-rich tracts occupy residues K54 to A73, K94 to P113, and A121 to A133. A compositionally biased stretch (pro residues) spans P170–A187. A compositionally biased stretch (low complexity) spans A193 to P206. 2 stretches are compositionally biased toward pro residues: residues A207 to K217 and S258 to S268. Positions R285 to G304 are enriched in low complexity. Positions G320–N339 are enriched in gly residues. Residues A388 to A403 are compositionally biased toward pro residues. Residues F412–R422 are compositionally biased toward gly residues. Basic and acidic residues predominate over residues G425 to R439. Low complexity predominate over residues P486–A499. Basic residues predominate over residues M500–Q512. The tr-type G domain occupies R615–L787. Positions G624 to T631 are G1. Position 624-631 (G624–T631) interacts with GTP. Residues G649 to H653 form a G2 region. The tract at residues D674–G677 is G3. GTP is bound by residues D674–H678 and N728–D731. The segment at N728–D731 is G4. The tract at residues S764–I766 is G5.

This sequence belongs to the TRAFAC class translation factor GTPase superfamily. Classic translation factor GTPase family. IF-2 subfamily.

Its subcellular location is the cytoplasm. In terms of biological role, one of the essential components for the initiation of protein synthesis. Protects formylmethionyl-tRNA from spontaneous hydrolysis and promotes its binding to the 30S ribosomal subunits. Also involved in the hydrolysis of GTP during the formation of the 70S ribosomal complex. This chain is Translation initiation factor IF-2, found in Synechococcus sp. (strain WH7803).